A 370-amino-acid polypeptide reads, in one-letter code: Anhydro-N-acetylmuramic acid kinase (370 aa).

ATP is bound at residue 12–19; the sequence is GTSLDGVD.

The protein belongs to the anhydro-N-acetylmuramic acid kinase family.

It carries out the reaction 1,6-anhydro-N-acetyl-beta-muramate + ATP + H2O = N-acetyl-D-muramate 6-phosphate + ADP + H(+). It functions in the pathway amino-sugar metabolism; 1,6-anhydro-N-acetylmuramate degradation. The protein operates within cell wall biogenesis; peptidoglycan recycling. Functionally, catalyzes the specific phosphorylation of 1,6-anhydro-N-acetylmuramic acid (anhMurNAc) with the simultaneous cleavage of the 1,6-anhydro ring, generating MurNAc-6-P. Is required for the utilization of anhMurNAc either imported from the medium or derived from its own cell wall murein, and thus plays a role in cell wall recycling. The chain is Anhydro-N-acetylmuramic acid kinase from Proteus mirabilis (strain HI4320).